Here is a 546-residue protein sequence, read N- to C-terminus: CTP synthase (546 aa).

Residues 1–269 (MADTKYIFVT…DKVTLKKLAL (269 aa)) form an amidoligase domain region. A CTP-binding site is contributed by S15. S15 serves as a coordination point for UTP. 16-21 (SLGKGI) provides a ligand contact to ATP. Residue Y56 coordinates L-glutamine. Residue D73 participates in ATP binding. D73 and E143 together coordinate Mg(2+). CTP-binding positions include 150 to 152 (DIE), 190 to 195 (KTKPTQ), and K226. UTP is bound by residues 190–195 (KTKPTQ) and K226. The 243-residue stretch at 295–537 (HIGLIGKYVE…VKAAHEHSVK (243 aa)) folds into the Glutamine amidotransferase type-1 domain. L-glutamine is bound at residue G357. The active-site Nucleophile; for glutamine hydrolysis is C384. L-glutamine-binding positions include 385-388 (LGMQ), E408, and R465. Residues H510 and E512 contribute to the active site.

Belongs to the CTP synthase family. Homotetramer.

It catalyses the reaction UTP + L-glutamine + ATP + H2O = CTP + L-glutamate + ADP + phosphate + 2 H(+). The enzyme catalyses L-glutamine + H2O = L-glutamate + NH4(+). It carries out the reaction UTP + NH4(+) + ATP = CTP + ADP + phosphate + 2 H(+). The protein operates within pyrimidine metabolism; CTP biosynthesis via de novo pathway; CTP from UDP: step 2/2. Its activity is regulated as follows. Allosterically activated by GTP, when glutamine is the substrate; GTP has no effect on the reaction when ammonia is the substrate. The allosteric effector GTP functions by stabilizing the protein conformation that binds the tetrahedral intermediate(s) formed during glutamine hydrolysis. Inhibited by the product CTP, via allosteric rather than competitive inhibition. In terms of biological role, catalyzes the ATP-dependent amination of UTP to CTP with either L-glutamine or ammonia as the source of nitrogen. Regulates intracellular CTP levels through interactions with the four ribonucleotide triphosphates. The sequence is that of CTP synthase from Christiangramia forsetii (strain DSM 17595 / CGMCC 1.15422 / KT0803) (Gramella forsetii).